Consider the following 190-residue polypeptide: Peptidyl-tRNA hydrolase (190 aa).

Y18 is a binding site for tRNA. H23 (proton acceptor) is an active-site residue. TRNA-binding residues include Y69, N71, and N117.

This sequence belongs to the PTH family. As to quaternary structure, monomer.

It is found in the cytoplasm. The enzyme catalyses an N-acyl-L-alpha-aminoacyl-tRNA + H2O = an N-acyl-L-amino acid + a tRNA + H(+). In terms of biological role, hydrolyzes ribosome-free peptidyl-tRNAs (with 1 or more amino acids incorporated), which drop off the ribosome during protein synthesis, or as a result of ribosome stalling. Functionally, catalyzes the release of premature peptidyl moieties from peptidyl-tRNA molecules trapped in stalled 50S ribosomal subunits, and thus maintains levels of free tRNAs and 50S ribosomes. This chain is Peptidyl-tRNA hydrolase, found in Rhodococcus erythropolis (strain PR4 / NBRC 100887).